The sequence spans 244 residues: MAASARPVGVGGERATSFAMACSLLSRYVRQNGAAAAELGLGIRGEGEAPRAAPGTMSLLPGEAERKKETMELFPQSAGFGQQDAITADSAADAREQEPEKRQLTIFYGGKVLVFNDFPADKAKGLMQLASKGSTVAPQNAVAPAPAAVTDNTKAPMAVPAPVSSLPTAQADAQKPARANASDMPIARKASLHRFLEKRKDRLNAKTPYQASPSDATPVKKEPESQPWLGLGPNAVVKPIERGQ.

Residues 97 to 132 (QEPEKRQLTIFYGGKVLVFNDFPADKAKGLMQLASK) form the Tify domain. The Jas motif lies at 185–210 (PIARKASLHRFLEKRKDRLNAKTPYQ). Residues 187-194 (ARKASLHR) carry the Nuclear localization signal motif. Residues 193 to 244 (HRFLEKRKDRLNAKTPYQASPSDATPVKKEPESQPWLGLGPNAVVKPIERGQ) are disordered. Residues 194 to 204 (RFLEKRKDRLN) show a composition bias toward basic and acidic residues.

Belongs to the TIFY/JAZ family. Ubiquitinated. Targeted for degradation by the SCF(COI1) E3 ubiquitin ligase-proteasome pathway during jasmonate signaling.

Its subcellular location is the nucleus. In terms of biological role, repressor of jasmonate responses. The chain is Protein TIFY 10b from Oryza sativa subsp. indica (Rice).